Here is a 267-residue protein sequence, read N- to C-terminus: Urease accessory protein UreD 2 (267 aa).

This sequence belongs to the UreD family. As to quaternary structure, ureD, UreF and UreG form a complex that acts as a GTP-hydrolysis-dependent molecular chaperone, activating the urease apoprotein by helping to assemble the nickel containing metallocenter of UreC. The UreE protein probably delivers the nickel.

It localises to the cytoplasm. Functionally, required for maturation of urease via the functional incorporation of the urease nickel metallocenter. This is Urease accessory protein UreD 2 from Synechococcus sp. (strain JA-3-3Ab) (Cyanobacteria bacterium Yellowstone A-Prime).